We begin with the raw amino-acid sequence, 656 residues long: Threonine--tRNA ligase (656 aa).

The TGS domain maps to 1-64; sequence MAEAASLTFP…ERSGKIEIIT (64 aa). The segment at 246–548 is catalytic; sequence DHRRLGREMD…LIENYAGHFP (303 aa). The Zn(2+) site is built by C342, H393, and H525.

Belongs to the class-II aminoacyl-tRNA synthetase family. As to quaternary structure, homodimer. Zn(2+) is required as a cofactor.

It localises to the cytoplasm. The catalysed reaction is tRNA(Thr) + L-threonine + ATP = L-threonyl-tRNA(Thr) + AMP + diphosphate + H(+). Catalyzes the attachment of threonine to tRNA(Thr) in a two-step reaction: L-threonine is first activated by ATP to form Thr-AMP and then transferred to the acceptor end of tRNA(Thr). Also edits incorrectly charged L-seryl-tRNA(Thr). This Chelativorans sp. (strain BNC1) protein is Threonine--tRNA ligase.